Here is a 259-residue protein sequence, read N- to C-terminus: UPF0758 protein Bphyt_3148 (259 aa).

The MPN domain occupies 137–259 (LLNSPEAVEN…VYSFARAGWP (123 aa)). H208, H210, and D221 together coordinate Zn(2+). Positions 208-221 (HNHPSGAVQPSASD) match the JAMM motif motif.

This sequence belongs to the UPF0758 family.

The polypeptide is UPF0758 protein Bphyt_3148 (Paraburkholderia phytofirmans (strain DSM 17436 / LMG 22146 / PsJN) (Burkholderia phytofirmans)).